Reading from the N-terminus, the 287-residue chain is Mitochondrial dicarboxylate carrier (287 aa).

Solcar repeat units follow at residues 8 to 88 (SRWY…VRDR), 101 to 188 (EKVL…AKQL), and 197 to 280 (DNIF…LRKN). 6 consecutive transmembrane segments (helical) span residues 10–30 (WYFG…LDLL), 63–82 (GLSA…FAIY), 103–123 (VLLG…ADLV), 163–182 (GATM…LSCY), 203–223 (FVAS…LDVL), and 255–275 (GLVP…VFLE).

The protein belongs to the mitochondrial carrier (TC 2.A.29) family. As to expression, present in high amounts in liver and kidney, and at lower levels in all the other tissues analyzed.

Its subcellular location is the mitochondrion inner membrane. The catalysed reaction is (S)-malate(in) + phosphate(out) = (S)-malate(out) + phosphate(in). It catalyses the reaction malonate(out) + (S)-malate(in) = malonate(in) + (S)-malate(out). It carries out the reaction (S)-malate(in) + succinate(out) = (S)-malate(out) + succinate(in). The enzyme catalyses (S)-malate(in) + sulfate(out) = (S)-malate(out) + sulfate(in). The catalysed reaction is malonate(out) + phosphate(in) = malonate(in) + phosphate(out). It catalyses the reaction succinate(out) + phosphate(in) = succinate(in) + phosphate(out). It carries out the reaction sulfate(out) + phosphate(in) = sulfate(in) + phosphate(out). The enzyme catalyses malonate(out) + succinate(in) = malonate(in) + succinate(out). Catalyzes the electroneutral exchange or flux of physiologically important metabolites such as dicarboxylates (malonate, malate, succinate), inorganic sulfur-containing anions, and phosphate, across mitochondrial inner membrane. Plays an important role in gluconeogenesis, fatty acid metabolism, urea synthesis, and sulfur metabolism, particularly in liver, by supplying the substrates for the different metabolic processes. Regulates fatty acid release from adipocytes, and contributes to systemic insulin sensitivity. In Homo sapiens (Human), this protein is Mitochondrial dicarboxylate carrier (SLC25A10).